We begin with the raw amino-acid sequence, 408 residues long: LL-diaminopimelate aminotransferase (408 aa).

Tyrosine 15 and glycine 42 together coordinate substrate. Pyridoxal 5'-phosphate is bound by residues tyrosine 72, 108-109 (SK), tyrosine 132, asparagine 187, tyrosine 218, and 246-248 (SFS). Substrate-binding residues include lysine 109, tyrosine 132, and asparagine 187. Lysine 249 is modified (N6-(pyridoxal phosphate)lysine). 2 residues coordinate pyridoxal 5'-phosphate: arginine 257 and asparagine 292. Substrate is bound by residues asparagine 292 and arginine 388.

Belongs to the class-I pyridoxal-phosphate-dependent aminotransferase family. LL-diaminopimelate aminotransferase subfamily. As to quaternary structure, homodimer. Pyridoxal 5'-phosphate serves as cofactor.

The catalysed reaction is (2S,6S)-2,6-diaminopimelate + 2-oxoglutarate = (S)-2,3,4,5-tetrahydrodipicolinate + L-glutamate + H2O + H(+). It participates in amino-acid biosynthesis; L-lysine biosynthesis via DAP pathway; LL-2,6-diaminopimelate from (S)-tetrahydrodipicolinate (aminotransferase route): step 1/1. Its function is as follows. Involved in the synthesis of meso-diaminopimelate (m-DAP or DL-DAP), required for both lysine and peptidoglycan biosynthesis. Catalyzes the direct conversion of tetrahydrodipicolinate to LL-diaminopimelate. This chain is LL-diaminopimelate aminotransferase, found in Synechococcus sp. (strain CC9902).